Reading from the N-terminus, the 143-residue chain is Large ribosomal subunit protein uL11 (143 aa).

The protein belongs to the universal ribosomal protein uL11 family. Part of the ribosomal stalk of the 50S ribosomal subunit. Interacts with L10 and the large rRNA to form the base of the stalk. L10 forms an elongated spine to which L12 dimers bind in a sequential fashion forming a multimeric L10(L12)X complex. Post-translationally, one or more lysine residues are methylated.

Its function is as follows. Forms part of the ribosomal stalk which helps the ribosome interact with GTP-bound translation factors. The polypeptide is Large ribosomal subunit protein uL11 (Paenarthrobacter aurescens (strain TC1)).